A 286-amino-acid chain; its full sequence is Outer kinetochore KNL1 complex subunit ZWINT (286 aa).

Residues Ser-85–Thr-211 adopt a coiled-coil conformation. The segment at Ala-230–Ser-286 is disordered. Over residues Gln-244–Gln-255 the composition is skewed to low complexity.

As to quaternary structure, component of the KNL1 complex composed of KNL1 and ZWINT. Part of the ten-subunit outer kinetochore KMN network that includes the KNL1, MIS12 and NDC80 complexes; a bioriented kinetochore contains approximately 150 copies of the network. Interacts with the MIS12 complex subunits MIS12 DSN1, and PMF1. Interacts with the NDC80 complex subunit NDC80 during mitosis. Interacts with ZW10. Interacts with CETN3.

It is found in the nucleus. The protein resides in the chromosome. Its subcellular location is the centromere. It localises to the kinetochore. Functionally, acts as a component of the outer kinetochore KNL1 complex that serves as a docking point for spindle assembly checkpoint components and mediates microtubule-kinetochore interactions. Kinetochores, consisting of a centromere-associated inner segment and a microtubule-contacting outer segment, play a crucial role in chromosome segregation by mediating the physical connection between centromeric DNA and spindle microtubules. The outer kinetochore is made up of the ten-subunit KMN network, comprising the MIS12, NDC80 and KNL1 complexes, and auxiliary microtubule-associated components; together they connect the outer kinetochore with the inner kinetochore, bind microtubules, and mediate interactions with mitotic checkpoint proteins that delay anaphase until chromosomes are bioriented on the spindle. Targets the RZZ complex to the kinetochore at prometaphase. Recruits MAD2L1 to the kinetochore, but is not required for BUB1B localization. In addition to orienting mitotic chromosomes, it is also essential for alignment of homologous chromosomes during meiotic metaphase I. In meiosis I, required to activate the spindle assembly checkpoint at unattached kinetochores to correct erroneous kinetochore-microtubule attachments. The sequence is that of Outer kinetochore KNL1 complex subunit ZWINT (ZWINT) from Bos taurus (Bovine).